Reading from the N-terminus, the 365-residue chain is Histidinol-phosphate aminotransferase (365 aa).

Position 222 is an N6-(pyridoxal phosphate)lysine (lysine 222).

It belongs to the class-II pyridoxal-phosphate-dependent aminotransferase family. Histidinol-phosphate aminotransferase subfamily. In terms of assembly, homodimer. Pyridoxal 5'-phosphate is required as a cofactor.

It catalyses the reaction L-histidinol phosphate + 2-oxoglutarate = 3-(imidazol-4-yl)-2-oxopropyl phosphate + L-glutamate. It participates in amino-acid biosynthesis; L-histidine biosynthesis; L-histidine from 5-phospho-alpha-D-ribose 1-diphosphate: step 7/9. The protein is Histidinol-phosphate aminotransferase of Geobacillus sp. (strain WCH70).